The chain runs to 158 residues: Placenta growth factor (158 aa).

The or 26 signal peptide spans 1–23 (MLAMKLFTCFLQVLAGLAVHSQG). Residues asparagine 29 and asparagine 30 are each glycosylated (N-linked (GlcNAc...) asparagine). 3 disulfides stabilise this stretch: cysteine 48–cysteine 90, cysteine 79–cysteine 125, and cysteine 83–cysteine 127. A glycan (N-linked (GlcNAc...) asparagine) is linked at asparagine 97. The tract at residues 136-158 (AERRKTKGKRKQSKTPQTEEPHL) is disordered. Residues 137–148 (ERRKTKGKRKQS) are compositionally biased toward basic residues.

The protein belongs to the PDGF/VEGF growth factor family. As to quaternary structure, antiparallel homodimer; disulfide-linked. Also found as heterodimer with VEGFA/VEGF.

It is found in the secreted. Growth factor active in angiogenesis and endothelial cell growth, stimulating their proliferation and migration. It binds to the receptor FLT1/VEGFR-1. Also promotes cell tumor growth. The polypeptide is Placenta growth factor (Pgf) (Rattus norvegicus (Rat)).